Reading from the N-terminus, the 119-residue chain is Large ribosomal subunit protein uL22 (119 aa).

This sequence belongs to the universal ribosomal protein uL22 family. As to quaternary structure, part of the 50S ribosomal subunit.

Functionally, this protein binds specifically to 23S rRNA; its binding is stimulated by other ribosomal proteins, e.g. L4, L17, and L20. It is important during the early stages of 50S assembly. It makes multiple contacts with different domains of the 23S rRNA in the assembled 50S subunit and ribosome. The globular domain of the protein is located near the polypeptide exit tunnel on the outside of the subunit, while an extended beta-hairpin is found that lines the wall of the exit tunnel in the center of the 70S ribosome. The protein is Large ribosomal subunit protein uL22 of Rickettsia peacockii (strain Rustic).